Consider the following 70-residue polypeptide: DNA-directed RNA polymerase subunit epsilon (70 aa).

It belongs to the RNA polymerase subunit epsilon family. As to quaternary structure, RNAP is composed of a core of 2 alpha, a beta and a beta' subunit. The core is associated with a delta subunit, and at least one of epsilon or omega. When a sigma factor is associated with the core the holoenzyme is formed, which can initiate transcription.

The enzyme catalyses RNA(n) + a ribonucleoside 5'-triphosphate = RNA(n+1) + diphosphate. A non-essential component of RNA polymerase (RNAP). The chain is DNA-directed RNA polymerase subunit epsilon from Bacillus cytotoxicus (strain DSM 22905 / CIP 110041 / 391-98 / NVH 391-98).